Here is a 165-residue protein sequence, read N- to C-terminus: Nutritionally-regulated adipose and cardiac-enriched protein (165 aa).

Residues 1 to 47 form a disordered region; that stretch reads MRSAARVSRSNSHPRTRHPTRENEGTTWGSQPSRTERDGDRKCPPSI. Positions 34-43 are enriched in basic and acidic residues; it reads RTERDGDRKC. The chain crosses the membrane as a helical span at residues 112-132; that stretch reads GSLFLWLTLCALLGVVLVLYC.

As to expression, predominantly expressed in white adipose tissue (at protein level) and brown adipose tissue. Also detected in heart.

It localises to the cell membrane. The polypeptide is Nutritionally-regulated adipose and cardiac-enriched protein (Nrac) (Mus musculus (Mouse)).